A 523-amino-acid polypeptide reads, in one-letter code: Ribonuclease Y (523 aa).

The helical transmembrane segment at Leu7–Tyr24 threads the bilayer. The KH domain occupies Leu213–Asp279. Residues Ala339–Ala432 form the HD domain.

The protein belongs to the RNase Y family.

It localises to the cell membrane. Its function is as follows. Endoribonuclease that initiates mRNA decay. This Wolinella succinogenes (strain ATCC 29543 / DSM 1740 / CCUG 13145 / JCM 31913 / LMG 7466 / NCTC 11488 / FDC 602W) (Vibrio succinogenes) protein is Ribonuclease Y.